A 90-amino-acid chain; its full sequence is Small ribosomal subunit protein bS20 (90 aa).

Residues 1–21 (MANHKSALKRVRQTKKRTERN) form a disordered region.

Belongs to the bacterial ribosomal protein bS20 family.

Its function is as follows. Binds directly to 16S ribosomal RNA. The protein is Small ribosomal subunit protein bS20 of Nitratiruptor sp. (strain SB155-2).